Here is a 620-residue protein sequence, read N- to C-terminus: MALLQIAEPGQSPQPHQRRLAVGIDLGTTNSLVAALRSGLSEPLPDADGQVILPSAVRYHADRTEVGESAKLAASADPLNTVLSVKRLMGRGLSDVKQLGDQLPYRFVGGESHMPFIDTVQGPKSPVEVSADILKVLRQRAETTLGGELVGAVITVPAYFDDAQRQATKDAAKLAGLNVLRLLNEPTAAAVAYGLDQHAEGLVAIYDLGGGTFDISILRLTGGVFEVLATGGDSALGGDDFDHTVAGWIISSAGLSADLDPGAQRNLLQTACAAKEALTDAATVEVSYGTWSAQLTREAFDALIEPMVARSLKACRRAVRDSGVELEDVGAVVMVGGSTRVPRVRDAVAEAFGRQPLTEIDPDQVVAIGAAIQADTLAGNKRDGGELLLLDVIPLSLGLETMGGLMEKVIPRNTTIPVARAQDFTTYKDGQTAMMIHVLQGERELISDCRSLARFELRGIPAMVAGAAKIRVTYQVDADGLLSVAARELASGVEASIQVKPSYGLTDGEIAKMLKDSFQYAGDDKVARVLREQQVDAQRLLEAVQGALDVDGERLLDAEERMVIDLQMQELAELIKGTDGYAIEQQTKRLSQVTDAFAARRMDQSVKAALAGRNLNELEE.

This sequence belongs to the heat shock protein 70 family.

Chaperone involved in the maturation of iron-sulfur cluster-containing proteins. Has a low intrinsic ATPase activity which is markedly stimulated by HscB. The polypeptide is Chaperone protein HscA homolog (Pseudomonas fluorescens (strain SBW25)).